Here is a 151-residue protein sequence, read N- to C-terminus: D-aminoacyl-tRNA deacylase (151 aa).

A Gly-cisPro motif, important for rejection of L-amino acids motif is present at residues 137-138 (GP).

This sequence belongs to the DTD family. In terms of assembly, homodimer.

It is found in the cytoplasm. It catalyses the reaction glycyl-tRNA(Ala) + H2O = tRNA(Ala) + glycine + H(+). The catalysed reaction is a D-aminoacyl-tRNA + H2O = a tRNA + a D-alpha-amino acid + H(+). Functionally, an aminoacyl-tRNA editing enzyme that deacylates mischarged D-aminoacyl-tRNAs. Also deacylates mischarged glycyl-tRNA(Ala), protecting cells against glycine mischarging by AlaRS. Acts via tRNA-based rather than protein-based catalysis; rejects L-amino acids rather than detecting D-amino acids in the active site. By recycling D-aminoacyl-tRNA to D-amino acids and free tRNA molecules, this enzyme counteracts the toxicity associated with the formation of D-aminoacyl-tRNA entities in vivo and helps enforce protein L-homochirality. This is D-aminoacyl-tRNA deacylase from Solibacter usitatus (strain Ellin6076).